Consider the following 301-residue polypeptide: Glycine--tRNA ligase alpha subunit (301 aa).

Belongs to the class-II aminoacyl-tRNA synthetase family. In terms of assembly, tetramer of two alpha and two beta subunits.

The protein resides in the cytoplasm. It carries out the reaction tRNA(Gly) + glycine + ATP = glycyl-tRNA(Gly) + AMP + diphosphate. The protein is Glycine--tRNA ligase alpha subunit of Glaesserella parasuis serovar 5 (strain SH0165) (Haemophilus parasuis).